We begin with the raw amino-acid sequence, 67 residues long: Large ribosomal subunit protein uL29 (67 aa).

Belongs to the universal ribosomal protein uL29 family.

The protein is Large ribosomal subunit protein uL29 of Heliobacterium modesticaldum (strain ATCC 51547 / Ice1).